We begin with the raw amino-acid sequence, 156 residues long: Small ribosomal subunit protein uS7 (156 aa).

In terms of assembly, part of the 30S ribosomal subunit. Contacts proteins S9 and S11. Binds to the C-terminus of IF3 and to the C-terminus of Era.

One of the primary rRNA binding proteins, it binds directly to 3'-end of the 16S rRNA where it nucleates assembly of the head domain of the 30S subunit. Is located at the subunit interface close to the decoding center. Binds mRNA and the E site tRNA blocking its exit path in the ribosome. This blockage implies that this section of the ribosome must be able to move to release the deacetylated tRNA. This Thermus thermophilus (strain ATCC 27634 / DSM 579 / HB8) protein is Small ribosomal subunit protein uS7 (rpsG).